A 228-amino-acid polypeptide reads, in one-letter code: Heptaprenylglyceryl phosphate synthase (228 aa).

K12 lines the sn-glycerol 1-phosphate pocket. Residues D14 and S40 each coordinate Mg(2+). Residues 159-164 (YLEYSG), G189, and 209-210 (GN) each bind sn-glycerol 1-phosphate.

Belongs to the GGGP/HepGP synthase family. Group I subfamily. In terms of assembly, homodimer. The cofactor is Mg(2+).

It carries out the reaction sn-glycerol 1-phosphate + all-trans-heptaprenyl diphosphate = 3-heptaprenyl-sn-glycero-1-phosphate + diphosphate. Its pathway is membrane lipid metabolism; glycerophospholipid metabolism. Functionally, prenyltransferase that catalyzes in vivo the transfer of the heptaprenyl moiety of heptaprenyl pyrophosphate (HepPP; 35 carbon atoms) to the C3 hydroxyl of sn-glycerol-1-phosphate (G1P), producing heptaprenylglyceryl phosphate (HepGP). This reaction is an ether-bond-formation step in the biosynthesis of archaea-type G1P-based membrane lipids found in Bacillales. This is Heptaprenylglyceryl phosphate synthase from Bacillus licheniformis (strain ATCC 14580 / DSM 13 / JCM 2505 / CCUG 7422 / NBRC 12200 / NCIMB 9375 / NCTC 10341 / NRRL NRS-1264 / Gibson 46).